Reading from the N-terminus, the 449-residue chain is UDP-N-acetylmuramoylalanine--D-glutamate ligase (449 aa).

An ATP-binding site is contributed by 113-119 (GTNGKTT).

It belongs to the MurCDEF family.

It is found in the cytoplasm. The enzyme catalyses UDP-N-acetyl-alpha-D-muramoyl-L-alanine + D-glutamate + ATP = UDP-N-acetyl-alpha-D-muramoyl-L-alanyl-D-glutamate + ADP + phosphate + H(+). The protein operates within cell wall biogenesis; peptidoglycan biosynthesis. In terms of biological role, cell wall formation. Catalyzes the addition of glutamate to the nucleotide precursor UDP-N-acetylmuramoyl-L-alanine (UMA). The polypeptide is UDP-N-acetylmuramoylalanine--D-glutamate ligase (Microcystis aeruginosa (strain NIES-843 / IAM M-2473)).